Consider the following 468-residue polypeptide: Nuclear distribution protein PAC1-2 (468 aa).

Residues 13–45 (QAEELHKSIIAYLTSLNLATTANTLRAELNLPE) enclose the LisH domain. The stretch at 66–92 (SVIRLQKKVLDLQAENAHLKNEIENAG) forms a coiled coil. WD repeat units lie at residues 118-159 (GHRL…RTLK), 161-201 (HTKA…KNIR), 205-251 (GHDH…CVKT), 254-293 (GHND…PECR), 298-358 (GHEN…IKVL), 360-399 (GHDN…KCVQ), 404-429 (MFDG…GDAG), and 430-468 (DGTP…IFAN).

This sequence belongs to the WD repeat LIS1/nudF family. Self-associates. Interacts with NDL1 and dynein.

The protein localises to the cytoplasm. It is found in the cytoskeleton. It localises to the spindle pole. Functionally, positively regulates the activity of the minus-end directed microtubule motor protein dynein. May enhance dynein-mediated microtubule sliding by targeting dynein to the microtubule plus end. Required for nuclear migration during vegetative growth as well as development. Required for retrograde early endosome (EE) transport from the hyphal tip. Required for localization of dynein to the mitotic spindle poles. Recruits additional proteins to the dynein complex at SPBs. This is Nuclear distribution protein PAC1-2 from Podospora anserina (strain S / ATCC MYA-4624 / DSM 980 / FGSC 10383) (Pleurage anserina).